The sequence spans 328 residues: MIYQMQMPEKIDVDEGTHNDKNGIFIAQPLERGYGVTLGNAMRRVLLASLPGTAITGIKIDGVFHEFSAIDGVREDVPDIILNLKKVRFRSSTKRSCKTTVTVDGPADVTAGDIVAQEGEFEVLNTDLHIATVNEGSRLSMDVYIGRGRGYVPAEDNRGDGMPLGFIAIDSIFTPIKNVKFSVENTRVGQRTDYEKMILDVETDGSVSPDDSISLAGKIINEHVSLFANFSPTDEEFTEEEYKQQDDEFENMRKMLLTRIEDLDLSVRSHNCLRLAEIDTLGDLVSRKEDELLTYKNFGKKSLTELKEQLEKFELKFGMDITKYQMKG.

The segment at 1–231 (MIYQMQMPEK…EHVSLFANFS (231 aa)) is alpha N-terminal domain (alpha-NTD). The segment at 252 to 328 (MRKMLLTRIE…MDITKYQMKG (77 aa)) is alpha C-terminal domain (alpha-CTD).

It belongs to the RNA polymerase alpha chain family. In terms of assembly, homodimer. The RNAP catalytic core consists of 2 alpha, 1 beta, 1 beta' and 1 omega subunit. When a sigma factor is associated with the core the holoenzyme is formed, which can initiate transcription.

It catalyses the reaction RNA(n) + a ribonucleoside 5'-triphosphate = RNA(n+1) + diphosphate. Its function is as follows. DNA-dependent RNA polymerase catalyzes the transcription of DNA into RNA using the four ribonucleoside triphosphates as substrates. The polypeptide is DNA-directed RNA polymerase subunit alpha (Chlorobium phaeobacteroides (strain BS1)).